A 120-amino-acid polypeptide reads, in one-letter code: Holo-[acyl-carrier-protein] synthase (120 aa).

Residues aspartate 8 and glutamate 58 each contribute to the Mg(2+) site.

The protein belongs to the P-Pant transferase superfamily. AcpS family. The cofactor is Mg(2+).

The protein localises to the cytoplasm. It catalyses the reaction apo-[ACP] + CoA = holo-[ACP] + adenosine 3',5'-bisphosphate + H(+). Its function is as follows. Transfers the 4'-phosphopantetheine moiety from coenzyme A to a Ser of acyl-carrier-protein. The chain is Holo-[acyl-carrier-protein] synthase from Limosilactobacillus reuteri (strain DSM 20016) (Lactobacillus reuteri).